A 597-amino-acid polypeptide reads, in one-letter code: Polyphenol oxidase latent form, chloroplastic (597 aa).

The N-terminal 49 residues, 1-49, are a transit peptide targeting the chloroplast; it reads MATAPSPTTMGTYSSLISTNSFSTFLPNKSQLSLSGKSKHYVARRSSIS. The disordered stretch occupies residues 49–70; it reads SCKATNNNNSNNQNEQQEESSR. A thylakoid-targeting transit peptide spans 50-101; it reads CKATNNNNSNNQNEQQEESSRLLGKLDRRNILIGLGGLYGATTLDRKPFAFA. A compositionally biased stretch (low complexity) spans 54–63; that stretch reads NNNNSNNQNE. 2 cysteine pairs are disulfide-bonded: Cys-112–Cys-128 and Cys-127–Cys-189. Cu cation-binding residues include His-188, His-209, His-218, His-341, His-345, and His-375. The segment at residues 192–209 is a cross-link (2'-(S-cysteinyl)-histidine (Cys-His)); sequence CNGAYPQVGFTDNDIQVH.

It belongs to the tyrosinase family. In terms of assembly, monomer. Cu(2+) is required as a cofactor. As to expression, expressed in immature-green fruit.

It localises to the plastid. The protein resides in the chloroplast thylakoid lumen. The catalysed reaction is 2 catechol + O2 = 2 1,2-benzoquinone + 2 H2O. Its activity is regulated as follows. Activated in the presence of substrate at low pH. Specific activity fluctuates during fruit ripening, starting at immature-green stage, reaching a peak at the breaker stage, followed by a sharp decrease until the half-ripe stage to remain stable during the following development stages. Triggered by CuSO(4) and by low concentrations of SDS. Repressed by several inhibitors including 4-hexylresorcinol, ascorbic acid, benzoic acid, kojic acid, glutathione (reduced form), L-cysteine and sodium metabisulfite. Inhibited by various salt such as FeSO(4), KCl, NaCl, CaCl(2), MnCl(2), NiCl(2) and AlCl(3). Spontaneously activated during storage at 4 degrees Celsius. In terms of biological role, catalyzes the oxidation of mono- and o-diphenols to o-diquinones. Uses preferentially 4-methylcatechol and chlorogenic acid as substrates, followed by caffeic acid, pyrogallol, and catechol, but barely active toward dopamine and L-dopa. No activity detected with monophenols (e.g. phenol and tyramine). This chain is Polyphenol oxidase latent form, chloroplastic, found in Prunus armeniaca (Apricot).